The sequence spans 942 residues: Alanine--tRNA ligase (942 aa).

The Zn(2+) site is built by histidine 586, histidine 590, cysteine 695, and histidine 699.

This sequence belongs to the class-II aminoacyl-tRNA synthetase family. Zn(2+) serves as cofactor.

It is found in the cytoplasm. The catalysed reaction is tRNA(Ala) + L-alanine + ATP = L-alanyl-tRNA(Ala) + AMP + diphosphate. Its function is as follows. Catalyzes the attachment of alanine to tRNA(Ala) in a two-step reaction: alanine is first activated by ATP to form Ala-AMP and then transferred to the acceptor end of tRNA(Ala). Also edits incorrectly charged Ser-tRNA(Ala) and Gly-tRNA(Ala) via its editing domain. The chain is Alanine--tRNA ligase from Akkermansia muciniphila (strain ATCC BAA-835 / DSM 22959 / JCM 33894 / BCRC 81048 / CCUG 64013 / CIP 107961 / Muc).